The sequence spans 301 residues: 4-hydroxy-tetrahydrodipicolinate synthase (301 aa).

Threonine 55 contacts pyruvate. Tyrosine 143 serves as the catalytic Proton donor/acceptor. The active-site Schiff-base intermediate with substrate is lysine 171. Residue isoleucine 213 participates in pyruvate binding.

The protein belongs to the DapA family. As to quaternary structure, homotetramer; dimer of dimers.

It localises to the cytoplasm. It carries out the reaction L-aspartate 4-semialdehyde + pyruvate = (2S,4S)-4-hydroxy-2,3,4,5-tetrahydrodipicolinate + H2O + H(+). The protein operates within amino-acid biosynthesis; L-lysine biosynthesis via DAP pathway; (S)-tetrahydrodipicolinate from L-aspartate: step 3/4. Catalyzes the condensation of (S)-aspartate-beta-semialdehyde [(S)-ASA] and pyruvate to 4-hydroxy-tetrahydrodipicolinate (HTPA). This is 4-hydroxy-tetrahydrodipicolinate synthase from Psychrobacter arcticus (strain DSM 17307 / VKM B-2377 / 273-4).